A 497-amino-acid polypeptide reads, in one-letter code: C4-dicarboxylate transport protein (497 aa).

Transmembrane regions (helical) follow at residues 27–45 (LYVQ…GYFY), 60–82 (IMLV…IAGM), 95–117 (AMIY…ANVV), 168–185 (ILQV…LAIV), 205–227 (RLVA…FTIG), 237–259 (LAML…LGAV), 348–370 (ILLL…AGFI), and 374–393 (ATLS…ILGI). Positions 466–497 (ADRTLAGRPGGRDSRRIAPDHSAQVFGGPLSL) are disordered. The segment covering 475–484 (GGRDSRRIAP) has biased composition (basic and acidic residues).

The protein belongs to the dicarboxylate/amino acid:cation symporter (DAACS) (TC 2.A.23) family.

It localises to the cell inner membrane. In terms of biological role, responsible for the transport of dicarboxylates such as succinate, fumarate, and malate from the periplasm across the inner membrane. This transport system plays an essential role in the energy supply of tropical rhizobium-legume symbionts. The chain is C4-dicarboxylate transport protein (dctA1) from Sinorhizobium fredii (strain NBRC 101917 / NGR234).